The primary structure comprises 84 residues: Double gene block protein 2 (84 aa).

At 1 to 4 the chain is on the lumenal side; sequence MPSA. A helical membrane pass occupies residues 5–25; that stretch reads NLHPIVLTGVIGLMLLIRLRC. The Cytoplasmic portion of the chain corresponds to 26 to 30; that stretch reads TFTST. A helical transmembrane segment spans residues 31–51; it reads FSLPPLVTLNQIIALSFCGLL. Residues 52–84 are Lumenal-facing; sequence LNSISRAERACYYNYSVDSSKQQHISISTPNGK.

This sequence belongs to the carmovirus double gene block protein 2 family.

Its subcellular location is the host endoplasmic reticulum membrane. Its function is as follows. Cell-to-cell movement function. The polypeptide is Double gene block protein 2 (Carnation mottle virus (isolate China/Shanghai) (CarMV)).